An 853-amino-acid chain; its full sequence is DNA (cytosine-5)-methyltransferase 3B (853 aa).

Basic and acidic residues predominate over residues 1–20; that stretch reads MKGDTRHLNGEEDAGGREDS. The disordered stretch occupies residues 1–218; it reads MKGDTRHLNG…SGDGDSSEYQ (218 aa). Residues 1 to 298 are interaction with DNMT1 and DNMT3A; sequence MKGDTRHLNG…LATFNKLVSY (298 aa). The span at 72 to 81 shows a compositional bias: acidic residues; sequence GDGDGEDGDG. Ser-82 is modified (phosphoserine). Lys-89 participates in a covalent cross-link: Glycyl lysine isopeptide (Lys-Gly) (interchain with G-Cter in SUMO2). Thr-96 is modified (phosphothreonine). Residues Ser-100 and Ser-110 each carry the phosphoserine modification. A compositionally biased stretch (basic residues) spans 115-130; sequence ERHRPSPRSTRGRQGR. Ser-136, Ser-195, Ser-202, and Ser-209 each carry phosphoserine. Residues 179 to 199 show a composition bias toward polar residues; sequence GTPQSSSTPYARLAQDSQQGG. Positions 225–283 constitute a PWWP domain; sequence IGDLVWGKIKGFSWWPAMVVSWKATSKRQAMSGMRWVQWFGDGKFSEVSADKLVALGLF. A disordered region spans residues 341–423; sequence KPTGIEGLKP…DQSREQMASD (83 aa). Composition is skewed to basic and acidic residues over residues 368–385 and 407–417; these read RKLE…RTAD and GKDRGDEDQSR. At Arg-410 the chain carries Citrulline. One can recognise an ADD domain in the interval 423-555; that stretch reads DVANNKSSLE…LQAFFTSDTG (133 aa). A GATA-type; atypical zinc finger spans residues 434-464; sequence GCLSCGRKNPVSFHPLFEGGLCQTCRDRFLE. Residues 435–527 form an interaction with the PRC2/EED-EZH2 complex region; that stretch reads CLSCGRKNPV…LQEPWSCYMC (93 aa). The segment at 475–531 adopts a PHD-type; atypical zinc-finger fold; it reads QSYCTVCCEGRELLLCSNTSCCRCFCVECLEVLVGTGTAAEAKLQEPWSCYMCLPQR. In terms of domain architecture, SAM-dependent MTase C5-type spans 575–853; that stretch reads IRVLSLFDGI…APLKDYFACE (279 aa). Residues 582–586 and Glu-605 each bind S-adenosyl-L-methionine; that span reads DGIAT. Residue Lys-617 forms a Glycyl lysine isopeptide (Lys-Gly) (interchain with G-Cter in SUMO2) linkage. An S-adenosyl-L-methionine-binding site is contributed by 627–629; that stretch reads DVR. Cys-651 is a catalytic residue. Position 832–834 (832–834) interacts with S-adenosyl-L-methionine; that stretch reads RSW.

Belongs to the class I-like SAM-binding methyltransferase superfamily. C5-methyltransferase family. Interacts with BAZ2A/TIP5, SUV39H1 and CBX4. Interacts with UHRF1. Interacts with DNMT1 and DNMT3A, SETDB1, UBL1, UBE2I9 and ZHX1. Interacts with the PRC2/EED-EZH2 complex. Post-translationally, sumoylated. In terms of processing, citrullinated by PADI4. Ubiquitous; highly expressed in fetal liver, heart, kidney, placenta, and at lower levels in spleen, colon, brain, liver, small intestine, lung, peripheral blood mononuclear cells, and skeletal muscle. Isoform 1 is expressed in all tissues except brain, skeletal muscle and PBMC, 3 is ubiquitous, 4 is expressed in all tissues except brain, skeletal muscle, lung and prostate and 5 is detectable only in testis and at very low level in brain and prostate.

Its subcellular location is the nucleus. It catalyses the reaction a 2'-deoxycytidine in DNA + S-adenosyl-L-methionine = a 5-methyl-2'-deoxycytidine in DNA + S-adenosyl-L-homocysteine + H(+). With respect to regulation, activated by binding to the regulatory factor DNMT3L. Functionally, required for genome-wide de novo methylation and is essential for the establishment of DNA methylation patterns during development. DNA methylation is coordinated with methylation of histones. May preferentially methylates nucleosomal DNA within the nucleosome core region. May function as transcriptional co-repressor by associating with CBX4 and independently of DNA methylation. Seems to be involved in gene silencing. In association with DNMT1 and via the recruitment of CTCFL/BORIS, involved in activation of BAG1 gene expression by modulating dimethylation of promoter histone H3 at H3K4 and H3K9. Isoforms 4 and 5 are probably not functional due to the deletion of two conserved methyltransferase motifs. Functions as a transcriptional corepressor by associating with ZHX1. Required for DUX4 silencing in somatic cells. This is DNA (cytosine-5)-methyltransferase 3B (DNMT3B) from Homo sapiens (Human).